The primary structure comprises 186 residues: Nicotinamide-nucleotide adenylyltransferase (186 aa).

Belongs to the archaeal NMN adenylyltransferase family.

It localises to the cytoplasm. It catalyses the reaction beta-nicotinamide D-ribonucleotide + ATP + H(+) = diphosphate + NAD(+). Its pathway is cofactor biosynthesis; NAD(+) biosynthesis; NAD(+) from nicotinamide D-ribonucleotide: step 1/1. This chain is Nicotinamide-nucleotide adenylyltransferase, found in Pyrococcus abyssi (strain GE5 / Orsay).